Consider the following 126-residue polypeptide: Protein ApaG (126 aa).

Residues 2-126 (SDTQHQVNVR…FRLAVPGALH (125 aa)) enclose the ApaG domain.

This is Protein ApaG from Pseudomonas paraeruginosa (strain DSM 24068 / PA7) (Pseudomonas aeruginosa (strain PA7)).